We begin with the raw amino-acid sequence, 316 residues long: Cytochrome c oxidase assembly protein COX18, mitochondrial (316 aa).

The chain crosses the membrane as a helical span at residues 164–184 (WKNALLPMVQIPLWVTVSMGI). Topologically, residues 185–213 (RTLTETQLIESFYPSWFSALGFSSFDLSS) are mitochondrial matrix. Residues 214 to 234 (PLVAMPLLAPILVGTLAVLNV) form a helical membrane-spanning segment. Topologically, residues 235-274 (ELNGRLMFSSSLSSQGIKTISRNSTRVQEAMTSILNVSRL) are mitochondrial intermembrane. Residues 275–295 (GCVVMLAMSSQAPFLLSLYWI) traverse the membrane as a helical segment. Residues 296 to 316 (SSQLFSLVQNIILNWIYPYQR) are Mitochondrial matrix-facing.

The protein belongs to the OXA1/ALB3/YidC family. As to quaternary structure, interacts with PNT1 and MSS2.

The protein resides in the mitochondrion inner membrane. Required for the insertion of integral membrane proteins into the mitochondrial inner membrane. Essential for the activity and assembly of cytochrome c oxidase. Plays a central role in the translocation and export of the C-terminal part of the COX2 protein into the mitochondrial intermembrane space. This chain is Cytochrome c oxidase assembly protein COX18, mitochondrial (COX18), found in Saccharomyces cerevisiae (strain ATCC 204508 / S288c) (Baker's yeast).